Consider the following 213-residue polypeptide: MYQDKILVRQLGLQPYEPVSQAMHEFTDTRDENTPDEIWLVEHFPVFTQGQAGKAEHVLMPGDIPVIQSDRGGQVTYHGPGQQVMYVLLNLKRRKLGVRELVTLLEQTVVNTLAERGIDAHPRADAPGVYVGEKKICSLGLRIRRGCSFHGLALNVNMDLSPFLRINPCGYAGMEMAKISQWDNNATTDNIAPRLLANILALLNNPPHEYIPA.

Positions 32–207 constitute a BPL/LPL catalytic domain; that stretch reads ENTPDEIWLV…NILALLNNPP (176 aa). Residues 71 to 78, 138 to 140, and 151 to 153 contribute to the substrate site; these read RGGQVTYH, SLG, and GLA. The active-site Acyl-thioester intermediate is Cys169.

This sequence belongs to the LipB family.

Its subcellular location is the cytoplasm. It carries out the reaction octanoyl-[ACP] + L-lysyl-[protein] = N(6)-octanoyl-L-lysyl-[protein] + holo-[ACP] + H(+). It functions in the pathway protein modification; protein lipoylation via endogenous pathway; protein N(6)-(lipoyl)lysine from octanoyl-[acyl-carrier-protein]: step 1/2. Functionally, catalyzes the transfer of endogenously produced octanoic acid from octanoyl-acyl-carrier-protein onto the lipoyl domains of lipoate-dependent enzymes. Lipoyl-ACP can also act as a substrate although octanoyl-ACP is likely to be the physiological substrate. The sequence is that of Octanoyltransferase from Citrobacter koseri (strain ATCC BAA-895 / CDC 4225-83 / SGSC4696).